We begin with the raw amino-acid sequence, 1550 residues long: Cellulose synthase 1 (1550 aa).

The segment at 1-741 is catalytic; sequence MPEVRSSTQS…KERVLKGTVK (741 aa). Helical transmembrane passes span 26 to 46, 47 to 67, and 106 to 126; these read GAGL…TSVT, LPPE…FIVG, and GLLG…LFLS. The segment at 147–240 is catalytic subdomain A; it reads EWPTVDIFVP…YILIFDCDHV (94 aa). Residue D189 is part of the active site. Residues D236 and D238 each coordinate substrate. Positions 317–377 are catalytic subdomain B; it reads TAIEQIGGFA…GQRVRWARGM (61 aa). D333 is an active-site residue. The next 5 helical transmembrane spans lie at 398 to 418, 423 to 443, 468 to 488, 507 to 527, and 547 to 567; these read LCYL…IFLS, FLFF…AYAI, VYET…LLSP, FDLG…GGLA, and LLNS…IAVG. In terms of domain architecture, PilZ spans 572 to 647; sequence QKRNSHRIPA…PARIIRAGNG (76 aa). Disordered stretches follow at residues 711-734 and 768-813; these read SSPT…RKER and APAH…QPLA. A cyclic di-GMP binding domain region spans residues 742–1550; it reads MVSLLALLTF…KQLEDERRKS (809 aa). The segment covering 768–796 has biased composition (low complexity); that stretch reads APAHQPEASDLPPLPALLPATSGAAQAGA. The chain crosses the membrane as a helical span at residues 1513-1533; sequence VLLVGLLGCILIVSVLARALA.

In the N-terminal section; belongs to the glycosyltransferase 2 family. This sequence in the C-terminal section; belongs to the AcsB/BcsB family. Mg(2+) serves as cofactor.

It localises to the cell inner membrane. The catalysed reaction is [(1-&gt;4)-beta-D-glucosyl](n) + UDP-alpha-D-glucose = [(1-&gt;4)-beta-D-glucosyl](n+1) + UDP + H(+). It functions in the pathway glycan metabolism; bacterial cellulose biosynthesis. With respect to regulation, activated by c-di-GMP. Functionally, bifunctional protein comprised of a catalytic subunit and a regulatory subunit. The catalytic subunit of cellulose synthase polymerizes uridine 5'-diphosphate glucose to cellulose in a processive way. The thick cellulosic mats generated by this enzyme probably provide a specialized protective environment to the bacterium. The regulatory subunit binds bis-(3'-5') cyclic diguanylic acid (c-di-GMP). The polypeptide is Cellulose synthase 1 (acsAB) (Komagataeibacter xylinus (Gluconacetobacter xylinus)).